The following is a 141-amino-acid chain: Hemoglobin subunit alpha-D (141 aa).

Positions 1–141 (MLTADDKKLI…VAAVLAEKYR (141 aa)) constitute a Globin domain. The heme b site is built by His-58 and His-87.

It belongs to the globin family. Heterotetramer of two alpha-D chains and two beta chains. In terms of tissue distribution, red blood cells.

Functionally, involved in oxygen transport from the lung to the various peripheral tissues. The sequence is that of Hemoglobin subunit alpha-D (HBAD) from Struthio camelus (Common ostrich).